Consider the following 157-residue polypeptide: uncharacterized protein (157 aa).

Helical transmembrane passes span 3–23, 24–44, 47–67, and 105–125; these read IFSF…MFIS, AFLS…ALAV, LMLG…ATAG, and IALL…IAGW.

This sequence to E.coli YqaA.

The protein resides in the cell membrane. This is an uncharacterized protein from Haemophilus influenzae (strain ATCC 51907 / DSM 11121 / KW20 / Rd).